A 551-amino-acid polypeptide reads, in one-letter code: Protein PNS1 (551 aa).

The interval 1–72 is disordered; the sequence is MSAQEFYQGG…TGGQPVYQDT (72 aa). The Cytoplasmic segment spans residues 1–94; the sequence is MSAQEFYQGG…RMNPRKRVND (94 aa). The span at 8-19 shows a compositional bias: low complexity; that stretch reads QGGNQRGYQQQQ. The segment covering 45–63 has biased composition (polar residues); it reads PPNYNMKPSQPYASTNPET. Residues 95–115 traverse the membrane as a helical segment; it reads IIPLILFIAAVVGFAVVSGIA. Residues 116-147 lie on the Extracellular side of the membrane; sequence IHGFVQVNGLGGGMGDSSIGRTGSSITLDYHT. A helical transmembrane segment spans residues 148–168; it reads VYLLLVVVALGLVIASLYLAA. Topologically, residues 169–177 are cytoplasmic; the sequence is LRAFTKIIL. Residues 178-198 form a helical membrane-spanning segment; sequence EVTLALTVILNIGICIYYFII. Topologically, residues 199–200 are extracellular; the sequence is QY. A helical membrane pass occupies residues 201–221; it reads WSGAIIFLIIALVSVFFYWGM. The Cytoplasmic segment spans residues 222 to 244; sequence RKRIPLAKLLLQTTIDVTKHHPS. Residues 245-265 traverse the membrane as a helical segment; the sequence is VYVVVFIGLIIQAAVSVWYTF. At 266 to 307 the chain is on the extracellular side; it reads TCIAIYVKWTPGSAACSDGGCSSSKVAGLVFYATFSYLWLSQ. A helical transmembrane segment spans residues 308–328; sequence VIGNVILCTLAGGVFGGWYYY. Topologically, residues 329–356 are cytoplasmic; the sequence is GPRTPGGGVPKRASLLAFVRASTLSLGS. Residues 357–377 traverse the membrane as a helical segment; it reads IAFGSLLVTILELLRLILQLF. Over 378–386 the chain is Extracellular; sequence RQYEAGQGD. A helical transmembrane segment spans residues 387-407; the sequence is MIGSILICIAQCCIGCIQWMV. The Cytoplasmic portion of the chain corresponds to 408–452; the sequence is EYFNKYAYIEIALYGKSYIPAAKDTWRLLKDRGIDALVNDSLVGT. Residues 453 to 473 form a helical membrane-spanning segment; it reads ALMWGAYINGFLCAVLGYFYL. Over 474–488 the chain is Extracellular; the sequence is RFTHPAYNSDGQYSA. Residues 489–509 form a helical membrane-spanning segment; it reads PVILFSFLIGLNESFTVGSAI. The Cytoplasmic portion of the chain corresponds to 510 to 551; sequence DAGVSTIFVGLGEDPMVLAERSPGLFEMIRQVYPRVVQGVPH.

The protein belongs to the CTL (choline transporter-like) family.

It localises to the cell membrane. Its function is as follows. Probably involved in transport through the plasma membrane. This is Protein PNS1 (PNS1) from Cryptococcus neoformans var. neoformans serotype D (strain B-3501A) (Filobasidiella neoformans).